The sequence spans 97 residues: Small ribosomal subunit protein bS6 (97 aa).

It belongs to the bacterial ribosomal protein bS6 family.

In terms of biological role, binds together with bS18 to 16S ribosomal RNA. The protein is Small ribosomal subunit protein bS6 of Limosilactobacillus fermentum (strain NBRC 3956 / LMG 18251) (Lactobacillus fermentum).